A 311-amino-acid chain; its full sequence is 1D-myo-inositol 2-acetamido-2-deoxy-alpha-D-glucopyranoside deacetylase (311 aa).

Histidine 29, aspartate 32, and histidine 162 together coordinate Zn(2+).

This sequence belongs to the MshB deacetylase family. Requires Zn(2+) as cofactor.

The catalysed reaction is 1D-myo-inositol 2-acetamido-2-deoxy-alpha-D-glucopyranoside + H2O = 1D-myo-inositol 2-amino-2-deoxy-alpha-D-glucopyranoside + acetate. Functionally, catalyzes the deacetylation of 1D-myo-inositol 2-acetamido-2-deoxy-alpha-D-glucopyranoside (GlcNAc-Ins) in the mycothiol biosynthesis pathway. The polypeptide is 1D-myo-inositol 2-acetamido-2-deoxy-alpha-D-glucopyranoside deacetylase (Corynebacterium efficiens (strain DSM 44549 / YS-314 / AJ 12310 / JCM 11189 / NBRC 100395)).